We begin with the raw amino-acid sequence, 351 residues long: Protein EXPRESSION OF TERPENOIDS 1 (351 aa).

Residues 1–23 (MANFFSLGGNQEQQHQEISSSQA) form a disordered region. The span at 11–22 (QEQQHQEISSSQ) shows a compositional bias: low complexity. Residues C129, C132, C140, C145, C149, and C156 each coordinate Zn(2+). The segment at residues 129–156 (CQDCGNQAKKDCQHMRCRTCCKSRGFQC) is a DNA-binding region (zn(2)-C6 fungal-type; degenerate). The interval 170 to 219 (RRERQQQLAALQQQQQGHNNNNNNHKNKRQREDPSASSLVSTRLPSNTNG) is disordered. Low complexity predominate over residues 175 to 193 (QQLAALQQQQQGHNNNNNN). Polar residues predominate over residues 204-219 (SASSLVSTRLPSNTNG). Positions 258–261 (IGGH) match the Required for homo- and heterodimerization motif. Positions 286–320 (TSSGGSAGGVQHHHHNSAAVATATTTSGGDATAAG) are disordered. The segment covering 303-320 (AAVATATTTSGGDATAAG) has biased composition (low complexity).

Belongs to the SHI protein family. As to quaternary structure, forms homodimers and heterodimers with LRP1.

Its subcellular location is the nucleus. Its function is as follows. Transcription activator involved in the transcriptional regulation of terpene biosynthesis in glandular trichomes. Binds to the promoter of the linalool synthase TPS5 and promotes TPS5 gene transactivation. Acts synergistically with MYC1 in the transactivation of TPS5. In Solanum lycopersicum (Tomato), this protein is Protein EXPRESSION OF TERPENOIDS 1.